Reading from the N-terminus, the 746-residue chain is Polyribonucleotide nucleotidyltransferase (746 aa).

Residues D490 and D496 each coordinate Mg(2+). Residues 557–619 (PRIETMIIGK…ATIDAAVKAI (63 aa)) enclose the KH domain. Residues 629 to 699 (GEVYEGKISS…KTGKFKLSRK (71 aa)) form the S1 motif domain. Residues 701–746 (LLPKPEGYEERPPRPERGERGPRQDRGDRGPRQDRGDRGPRREYRD) form a disordered region. The segment covering 706-746 (EGYEERPPRPERGERGPRQDRGDRGPRQDRGDRGPRREYRD) has biased composition (basic and acidic residues).

Belongs to the polyribonucleotide nucleotidyltransferase family. Mg(2+) serves as cofactor.

The protein localises to the cytoplasm. It catalyses the reaction RNA(n+1) + phosphate = RNA(n) + a ribonucleoside 5'-diphosphate. Functionally, involved in mRNA degradation. Catalyzes the phosphorolysis of single-stranded polyribonucleotides processively in the 3'- to 5'-direction. The protein is Polyribonucleotide nucleotidyltransferase of Parabacteroides distasonis (strain ATCC 8503 / DSM 20701 / CIP 104284 / JCM 5825 / NCTC 11152).